An 83-amino-acid polypeptide reads, in one-letter code: uncharacterized protein (83 aa).

The protein belongs to the BolA/IbaG family.

This is an uncharacterized protein from Acinetobacter guillouiae (Acinetobacter genomosp. 11).